The following is a 202-amino-acid chain: dITP/XTP pyrophosphatase (202 aa).

Residue 11-16 (TNNANK) participates in substrate binding. The active-site Proton acceptor is the Asp73. Asp73 contributes to the Mg(2+) binding site. Residues Ser74, 155–158 (FGYD), Lys178, and 183–184 (HR) each bind substrate.

It belongs to the HAM1 NTPase family. In terms of assembly, homodimer. Mg(2+) serves as cofactor.

It catalyses the reaction XTP + H2O = XMP + diphosphate + H(+). The enzyme catalyses dITP + H2O = dIMP + diphosphate + H(+). The catalysed reaction is ITP + H2O = IMP + diphosphate + H(+). Functionally, pyrophosphatase that catalyzes the hydrolysis of nucleoside triphosphates to their monophosphate derivatives, with a high preference for the non-canonical purine nucleotides XTP (xanthosine triphosphate), dITP (deoxyinosine triphosphate) and ITP. Seems to function as a house-cleaning enzyme that removes non-canonical purine nucleotides from the nucleotide pool, thus preventing their incorporation into DNA/RNA and avoiding chromosomal lesions. The sequence is that of dITP/XTP pyrophosphatase from Lactiplantibacillus plantarum (strain ATCC BAA-793 / NCIMB 8826 / WCFS1) (Lactobacillus plantarum).